The following is a 304-amino-acid chain: Calcium release-activated calcium channel protein 1 (304 aa).

The segment covering 1-11 (MHPEPAPPPSH) has biased composition (pro residues). Residues 1 to 50 (MHPEPAPPPSHSNPELPVSGGSSTSGSRRSRRRSGDGEPSGAPPLPPPPP) form a disordered region. Topologically, residues 1–89 (MHPEPAPPPS…KLYLSRAKLK (89 aa)) are cytoplasmic. The tract at residues 3–49 (PEPAPPPSHSNPELPVSGGSSTSGSRRSRRRSGDGEPSGAPPLPPPP) is required for generation of inwardly rectifying CRAC currents. Residues 12-27 (SNPELPVSGGSSTSGS) show a composition bias toward low complexity. An AKAP5 association region region spans residues 39–61 (PSGAPPLPPPPPAVSYPDWIGQS). Positions 41 to 50 (GAPPLPPPPP) are enriched in pro residues. Positions 72–92 (SMQALSWRKLYLSRAKLKASS) are interaction with STIM1. The chain crosses the membrane as a helical span at residues 90–107 (ASSRTSALLSGFAMVAMV). Over 108–121 (EVQLDTDHDYPPGL) the chain is Extracellular. The chain crosses the membrane as a helical span at residues 122-142 (LIVFSACTTVLVAVHLFALMI). Residues 143-175 (STCILPNIEAVSNVHNLNSVKESPHERMHRHIE) lie on the Cytoplasmic side of the membrane. A helical transmembrane segment spans residues 176 to 196 (LAWAFSTVIGTLLFLAEVVLL). Over 197–237 (CWVKFLPLKRQAGQPSPTKPPAESVIVANHSDSSGITPGEA) the chain is Extracellular. Asn-225 is a glycosylation site (N-linked (GlcNAc...) asparagine). A helical transmembrane segment spans residues 238–258 (AAIASTAIMVPCGLVFIVFAV). The Cytoplasmic segment spans residues 259–304 (HFYRSLVSHKTDRQFQELNELAEFARLQDQLDHRGDHSLTPGTHYA). Positions 275 to 295 (ELNELAEFARLQDQLDHRGDH) are interaction with STIM1. Thr-298 is modified (phosphothreonine).

It belongs to the Orai family. As to quaternary structure, oligomerizes in homomeric and heteromeric ORAI complexes. Native CRAC channels most likely consist of hexameric ORAI heteromers, implying that diverse ORAI1, ORAI2 and ORAI3 subunit combinations with distinct biophysical properties can operate in a cell-type specific way. ARC channels are heteropentamers consisting of three ORAI1 and two ORAI3 subunits. Interacts with STIM1 and STIM2; this regulates channel activity. Interacts with CALM; this may displace STIM1 and STIM2 and might thereby modulate channel activity. Interacts (via N-terminus) with AKAP5 upon store depletion. Interacts with CRACR2A/EFCAB4B; the interaction is direct and takes place in absence of Ca(2+). Forms a complex with CRACR2A/EFCAB4B and STIM1 at low concentration of Ca(2+), the complex dissociates at elevated Ca(2+) concentrations. Interacts with ASPH (isoform 8). Interacts with SLC35G1. Interacts with UBQLN1. Interacts with ADCY8; interaction is calcium store depletion independent; interaction occurs in membrane raft; interaction increases markedly after store depletion; positively regulates SOCE-induced adenylate cyclase activity; contributes to the targeting of ADCY8 to discrete regions of the plasma membrane that are shielded from other calcium events. Interacts with EFHB; the interaction takes place upon Ca(2+)-store depletion. Interacts (via N- and C-termini) with ATP2C2 (via N-terminus); this interaction regulates Ca(2+) influx at the plasma membrane. Interacts with TSPAN18; this interaction regulates ORAI1 exit from the endoplasmic (ER), and/or Golgi, and trafficking to the cell surface. In terms of processing, N-glycosylated. N-glycosylation inhibits channel activity in T cells. Ubiquitinated. Post-translationally, cys-195 is oxidated, leading to inactivation of channel activity. Expressed in lactating mammary epithelium (at protein level).

The protein resides in the cell membrane. The protein localises to the basolateral cell membrane. The enzyme catalyses Ca(2+)(in) = Ca(2+)(out). With respect to regulation, oxidation at Cys-197 leads to inactivation of channel activity. Pore-forming subunit of two major inward rectifying Ca(2+) channels at the plasma membrane: Ca(2+) release-activated Ca(2+) (CRAC) channels and arachidonate-regulated Ca(2+)-selective (ARC) channels. Assembles with ORAI2 and ORAI3 to form hexameric CRAC channels that mediate Ca(2+) influx upon depletion of endoplasmic reticulum Ca(2+) store and channel activation by Ca(2+) sensor STIM1, a process known as store-operated Ca(2+) entry (SOCE). Various pore subunit combinations may account for distinct CRAC channel spatiotemporal and cell-type specific dynamics. ORAI1 mainly contributes to the generation of Ca(2+) plateaus involved in sustained Ca(2+) entry and is dispensable for cytosolic Ca(2+) oscillations, whereas ORAI2 and ORAI3 generate oscillatory patterns. CRAC channels assemble in Ca(2+) signaling microdomains where Ca(2+) influx is coupled to calmodulin and calcineurin signaling and activation of NFAT transcription factors recruited to ORAI1 via AKAP5. Activates NFATC2/NFAT1 and NFATC3/NFAT4-mediated transcriptional responses. CRAC channels are the main pathway for Ca(2+) influx in T cells and promote the immune response to pathogens by activating NFAT-dependent cytokine and chemokine transcription. Assembles with ORAI3 to form channels that mediate store-independent Ca(2+) influx in response to inflammatory metabolites arachidonate or its derivative leukotriene C4, termed ARC and LRC channels respectively. Plays a prominent role in Ca(2+) influx at the basolateral membrane of mammary epithelial cells independently of the Ca(2+) content of endoplasmic reticulum or Golgi stores. May mediate transepithelial transport of large quantities of Ca(2+) for milk secretion. In Mus musculus (Mouse), this protein is Calcium release-activated calcium channel protein 1 (Orai1).